Consider the following 462-residue polypeptide: ATP synthase subunit beta 1 (462 aa).

ATP is bound at residue 152–159 (GGAGVGKT).

The protein belongs to the ATPase alpha/beta chains family. In terms of assembly, F-type ATPases have 2 components, CF(1) - the catalytic core - and CF(0) - the membrane proton channel. CF(1) has five subunits: alpha(3), beta(3), gamma(1), delta(1), epsilon(1). CF(0) has four main subunits: a(1), b(1), b'(1) and c(9-12).

Its subcellular location is the cell inner membrane. The catalysed reaction is ATP + H2O + 4 H(+)(in) = ADP + phosphate + 5 H(+)(out). Produces ATP from ADP in the presence of a proton gradient across the membrane. The catalytic sites are hosted primarily by the beta subunits. This chain is ATP synthase subunit beta 1, found in Dinoroseobacter shibae (strain DSM 16493 / NCIMB 14021 / DFL 12).